A 340-amino-acid chain; its full sequence is Ketol-acid reductoisomerase (NADP(+)) (340 aa).

Residues 3-183 (VNIYYDKDCD…GGGRTGIIET (181 aa)) form the KARI N-terminal Rossmann domain. NADP(+) is bound by residues 26–29 (FGSQ), S54, and 84–87 (DELQ). H109 is a catalytic residue. Position 135 (G135) interacts with NADP(+). The 146-residue stretch at 184–329 (TFKDETETDL…KKLRAMMPWI (146 aa)) folds into the KARI C-terminal knotted domain. Mg(2+) contacts are provided by D192, E196, E228, and E232. Residue S253 participates in substrate binding.

This sequence belongs to the ketol-acid reductoisomerase family. The cofactor is Mg(2+).

The enzyme catalyses (2R)-2,3-dihydroxy-3-methylbutanoate + NADP(+) = (2S)-2-acetolactate + NADPH + H(+). The catalysed reaction is (2R,3R)-2,3-dihydroxy-3-methylpentanoate + NADP(+) = (S)-2-ethyl-2-hydroxy-3-oxobutanoate + NADPH + H(+). It participates in amino-acid biosynthesis; L-isoleucine biosynthesis; L-isoleucine from 2-oxobutanoate: step 2/4. Its pathway is amino-acid biosynthesis; L-valine biosynthesis; L-valine from pyruvate: step 2/4. Functionally, involved in the biosynthesis of branched-chain amino acids (BCAA). Catalyzes an alkyl-migration followed by a ketol-acid reduction of (S)-2-acetolactate (S2AL) to yield (R)-2,3-dihydroxy-isovalerate. In the isomerase reaction, S2AL is rearranged via a Mg-dependent methyl migration to produce 3-hydroxy-3-methyl-2-ketobutyrate (HMKB). In the reductase reaction, this 2-ketoacid undergoes a metal-dependent reduction by NADPH to yield (R)-2,3-dihydroxy-isovalerate. The sequence is that of Ketol-acid reductoisomerase (NADP(+)) from Campylobacter curvus (strain 525.92).